We begin with the raw amino-acid sequence, 273 residues long: MIKVAVTGAAGRMGSGIIRKITQQDDMEVVAAIEIPNSPLAGVDAGIQAGAGELGVKIVGAEKLEETLKESKADVLVDFTIAHAAVETVKKATACGVNVVVGTTGFTDEQMAENIKNVKDNDVKAVISSNMSIGVNVFFNTLKKLTPILNDFDIEIIEAHHNQKKDAPSGTAMTAFEVIANELDRDPEEVGVYGRQGMVGKRTKEEIGLHAIRGGDIVGDHTVMFIGDGERIEFTHRAHTREVFIAGVIRAIRYIPDAESGIVSSMNDVLGLE.

Residues 8-13, Glu-34, 102-104, and 128-131 contribute to the NAD(+) site; these read GAAGRM, GTT, and SSNM. The active-site Proton donor/acceptor is His-160. His-161 contributes to the (S)-2,3,4,5-tetrahydrodipicolinate binding site. Residue Lys-164 is the Proton donor of the active site. 170–171 contacts (S)-2,3,4,5-tetrahydrodipicolinate; the sequence is GT.

The protein belongs to the DapB family.

Its subcellular location is the cytoplasm. The catalysed reaction is (S)-2,3,4,5-tetrahydrodipicolinate + NAD(+) + H2O = (2S,4S)-4-hydroxy-2,3,4,5-tetrahydrodipicolinate + NADH + H(+). It catalyses the reaction (S)-2,3,4,5-tetrahydrodipicolinate + NADP(+) + H2O = (2S,4S)-4-hydroxy-2,3,4,5-tetrahydrodipicolinate + NADPH + H(+). It functions in the pathway amino-acid biosynthesis; L-lysine biosynthesis via DAP pathway; (S)-tetrahydrodipicolinate from L-aspartate: step 4/4. Catalyzes the conversion of 4-hydroxy-tetrahydrodipicolinate (HTPA) to tetrahydrodipicolinate. In Methanobrevibacter smithii (strain ATCC 35061 / DSM 861 / OCM 144 / PS), this protein is 4-hydroxy-tetrahydrodipicolinate reductase.